The chain runs to 220 residues: Protein US2 homolog (220 aa).

This sequence belongs to the herpesviridae US2 family.

This is Protein US2 homolog from Bovine herpesvirus 1.2 (strain ST) (BoHV-1).